We begin with the raw amino-acid sequence, 500 residues long: Replicase polyprotein 1ab (500 aa).

The CoV Nsp1 globular domain occupies L54–G196. Residues A352–F500 form the Peptidase C16 domain. C389 acts as the For PL1-PRO activity in catalysis. The C4-type zinc finger occupies C466–C494.

Belongs to the coronaviruses polyprotein 1ab family.

In terms of biological role, the replicase polyprotein of coronaviruses is a multifunctional protein: it contains the activities necessary for the transcription of negative stranded RNA, leader RNA, subgenomic mRNAs and progeny virion RNA as well as proteinases responsible for the cleavage of the polyprotein into functional products. The papain-like proteinase 1 (PL1-PRO) is responsible for the cleavages located at the N-terminus of the replicase polyprotein. Activity of PL1-PRO is strongly dependent on zinc. Its function is as follows. Non-structural protein 1: binds to the 40S ribosomal subunit and inhibits host translation. The nsp1-40S ribosome complex further induces an endonucleolytic cleavage near the 5'UTR of host mRNAs, targeting them for degradation. By suppressing host gene expression, nsp1 facilitates efficient viral gene expression in infected cells and evasion from host immune response. This is Replicase polyprotein 1ab (rep) from Mus musculus (Mouse).